Consider the following 444-residue polypeptide: 3-phosphoshikimate 1-carboxyvinyltransferase (444 aa).

Positions 24, 25, and 29 each coordinate 3-phosphoshikimate. Residue Lys-24 coordinates phosphoenolpyruvate. Residues Gly-97 and Arg-125 each contribute to the phosphoenolpyruvate site. Ser-170, Gln-172, Asp-318, and Lys-345 together coordinate 3-phosphoshikimate. Gln-172 is a binding site for phosphoenolpyruvate. Asp-318 serves as the catalytic Proton acceptor. Positions 349 and 391 each coordinate phosphoenolpyruvate.

The protein belongs to the EPSP synthase family. In terms of assembly, monomer.

The protein localises to the cytoplasm. It catalyses the reaction 3-phosphoshikimate + phosphoenolpyruvate = 5-O-(1-carboxyvinyl)-3-phosphoshikimate + phosphate. It functions in the pathway metabolic intermediate biosynthesis; chorismate biosynthesis; chorismate from D-erythrose 4-phosphate and phosphoenolpyruvate: step 6/7. Its function is as follows. Catalyzes the transfer of the enolpyruvyl moiety of phosphoenolpyruvate (PEP) to the 5-hydroxyl of shikimate-3-phosphate (S3P) to produce enolpyruvyl shikimate-3-phosphate and inorganic phosphate. In Halorhodospira halophila (strain DSM 244 / SL1) (Ectothiorhodospira halophila (strain DSM 244 / SL1)), this protein is 3-phosphoshikimate 1-carboxyvinyltransferase.